Consider the following 238-residue polypeptide: Tetrahydromethanopterin S-methyltransferase subunit A 1 (238 aa).

Residues 2-218 lie on the Cytoplasmic side of the membrane; it reads VEKKSPAEGW…RMFAGMYSGK (217 aa). His84 is a binding site for 5-hydroxybenzimidazolylcob(I)amide. Residues 219–237 traverse the membrane as a helical segment; sequence VQGIMIGLAFTLTLGILLL. A topological domain (extracellular) is located at residue Val238.

The protein belongs to the MtrA family. In terms of assembly, the complex is composed of 8 subunits; MtrA, MtrB, MtrC, MtrD, MtrE, MtrF, MtrG and MtrH. The cofactor is 5-hydroxybenzimidazolylcob(I)amide.

The protein localises to the cell membrane. The enzyme catalyses 5-methyl-5,6,7,8-tetrahydromethanopterin + coenzyme M + 2 Na(+)(in) = 5,6,7,8-tetrahydromethanopterin + methyl-coenzyme M + 2 Na(+)(out). Its pathway is one-carbon metabolism; methanogenesis from CO(2); methyl-coenzyme M from 5,10-methylene-5,6,7,8-tetrahydromethanopterin: step 2/2. In terms of biological role, part of a complex that catalyzes the formation of methyl-coenzyme M and tetrahydromethanopterin from coenzyme M and methyl-tetrahydromethanopterin. This is an energy-conserving, sodium-ion translocating step. This is Tetrahydromethanopterin S-methyltransferase subunit A 1 from Methanothermobacter thermautotrophicus (strain ATCC 29096 / DSM 1053 / JCM 10044 / NBRC 100330 / Delta H) (Methanobacterium thermoautotrophicum).